Consider the following 352-residue polypeptide: Plant intracellular Ras-group-related LRR protein 1 (352 aa).

Residues 1-25 (MREMGEKRRRGHLNPAGFAGGLHDH) form a disordered region. LRR repeat units lie at residues 29 to 52 (KNEE…TMSL), 53 to 75 (GQVT…IIAR), 77 to 99 (LNVV…IGCL), 100 to 122 (SKLK…IEEC), 124 to 146 (ALEE…GFEL), 147 to 169 (HSLR…TSHM), 171 to 192 (ALRA…LENL), 195 to 217 (LEAL…VGLL), 218 to 241 (ASLR…GCLT), and 243 to 263 (LARF…VVEQ). The short motif at 264–271 (GLDAMRAY) is the GVYW; degenerate element.

The protein belongs to the SHOC2 family. In terms of tissue distribution, widely expressed but at a lower level in seedlings and stems.

Leucine-rich repeat protein that likely mediates protein interactions, possibly in the context of signal transduction. In Oryza sativa subsp. japonica (Rice), this protein is Plant intracellular Ras-group-related LRR protein 1 (IRL1).